A 141-amino-acid polypeptide reads, in one-letter code: Acetyltransferase YpeA (141 aa).

The N-acetyltransferase domain occupies methionine 1–tyrosine 141.

It belongs to the acetyltransferase family. YpeA subfamily.

The sequence is that of Acetyltransferase YpeA from Escherichia coli O157:H7.